Here is a 581-residue protein sequence, read N- to C-terminus: Moesin/ezrin/radixin homolog 1 (581 aa).

The FERM domain maps to 8-298 (MNVRVTTMDA…GNHELYMRRR (291 aa)). A disordered region spans residues 452 to 519 (QVAKGSRAAA…EERRTLAERN (68 aa)). Positions 459–469 (AAAALQAATTT) are enriched in low complexity. Acidic residues predominate over residues 477–486 (EEEENEEELI). The segment covering 495–519 (FSKDFDTDEHIKDPVEERRTLAERN) has biased composition (basic and acidic residues). Thr-562 bears the Phosphothreonine mark.

As to quaternary structure, interacts with cytoskeletal actin.

It is found in the cell junction. The protein localises to the adherens junction. The protein resides in the cell projection. Its subcellular location is the microvillus. It localises to the rhabdomere. It is found in the cell membrane. The protein localises to the cytoplasm. The protein resides in the cytoskeleton. Functionally, involved in connections of major cytoskeletal structures to the plasma membrane. In Anopheles gambiae (African malaria mosquito), this protein is Moesin/ezrin/radixin homolog 1.